The following is a 512-amino-acid chain: ADP,ATP carrier protein 4 (512 aa).

11 consecutive transmembrane segments (helical) span residues 34 to 54, 71 to 91, 102 to 122, 157 to 177, 192 to 212, 231 to 251, 296 to 316, 330 to 350, 361 to 381, 390 to 410, and 476 to 496; these read ISKF…QNLI, ISFL…VIYV, IFYL…YVIF, FSLF…LLFW, FYPL…HFLE, FHTL…IVSI, LIAT…GPWK, AAFI…FVLL, FTSA…FFAV, LIIA…IGAI, and SISI…IWAT.

It belongs to the ADP/ATP translocase tlc family.

It is found in the cell membrane. Its function is as follows. Provides the rickettsial cell with host ATP in exchange for rickettsial ADP. This is an obligate exchange system. This energy acquiring activity is an important component of rickettsial parasitism. The sequence is that of ADP,ATP carrier protein 4 (tlcD) from Rickettsia prowazekii (strain Madrid E).